The chain runs to 340 residues: Major histocompatibility complex class I-related gene protein (340 aa).

Residues 1–22 (MGELMAFLLPLIIVLMVKHSNS) form the signal peptide. The tract at residues 23–109 (RTHSLRYFRL…KRLQRHYNHS (87 aa)) is alpha-1. The antigen-binding cleft stretch occupies residues 23–201 (RTHSLRYFRL…EYGKDTLQRT (179 aa)). Residues 23-302 (RTHSLRYFRL…QESEAIPLVM (280 aa)) lie on the Extracellular side of the membrane. Residues Y29 and R31 each coordinate 8-(9H-purin-6-yl)-2-oxa-8-azabicyclo[3.3.1]nona-3,6-diene-4,6-dicarbaldehyde. 5-(2-oxoethylideneamino)-6-(D-ribitylamino)uracil contacts are provided by R31, S46, and K65. 5-(2-oxopropylideneamino)-6-(D-ribitylamino)uracil contacts are provided by R31, S46, and K65. 7-hydroxy-6-methyl-8-(1-D-ribityl)lumazine is bound by residues R31, S46, and K65. 8-(9H-purin-6-yl)-2-oxa-8-azabicyclo[3.3.1]nona-3,6-diene-4,6-dicarbaldehyde-binding residues include K65 and H80. K65 contributes to the 2-amino-4-oxopteridine-6-carbaldehyde binding site. K65 contributes to the pyridoxal binding site. A glycan (N-linked (GlcNAc...) asparagine) is linked at N107. The interval 110–201 (GSHTYQRMIG…EYGKDTLQRT (92 aa)) is alpha-2. Position 116 (R116) interacts with 8-(9H-purin-6-yl)-2-oxa-8-azabicyclo[3.3.1]nona-3,6-diene-4,6-dicarbaldehyde. R116, Y174, and Q175 together coordinate 5-(2-oxoethylideneamino)-6-(D-ribitylamino)uracil. R116, Y174, and Q175 together coordinate 5-(2-oxopropylideneamino)-6-(D-ribitylamino)uracil. Residues R116, Y174, and Q175 each coordinate 7-hydroxy-6-methyl-8-(1-D-ribityl)lumazine. 2 disulfides stabilise this stretch: C120-C183 and C222-C278. Residues 202–293 (EPPLVRVNRK…GVHMVLQVPQ (92 aa)) are alpha-3. The Ig-like C1-type domain maps to 203 to 282 (PPLVRVNRKE…SNLYSCHVEH (80 aa)). The segment at 294–302 (ESEAIPLVM) is connecting peptide. A helical transmembrane segment spans residues 303-323 (KAVSGSIVFVIVLTGVGVLVW). Residues 324 to 340 (RRRPREQNGAVYLPTPD) lie on the Cytoplasmic side of the membrane.

It belongs to the MHC class I family. In terms of assembly, heterotrimer that consists of MR1, B2M and metabolite antigen. Major classes of metabolite ligands presented by MR1 include riboflavin-related antigens, pyrimidines and ribityl lumazines, nucleobase adducts and folate derivatives. Forms reversible covalent Schiff base complexes with microbial pyrimidine-based metabolite, which serves as a molecular switch triggering complete folding, stable association with B2M and translocation of the ternary complex from endoplasmic reticulum to the plasma membrane. Alternatively, forms non-Schiff base complexes with ribityl lumazines. On antigen-presenting cells, the ternary complex interacts with TCR on MR1-restricted T cells. Interacts with TAPBP and TAPBPL chaperones in the endoplasmic reticulum. TAPBP associated or not with MHC class I peptide loading complex binds ligand-free MR1 or MR1-B2M complex, providing for stable MR1 pools ready for metabolite antigen processing. TAPBPL interacts with MR1 in a ligand-independent way; this interaction may stabilize MR1 pool and facilitate ligand loading and dissociation. Structurally, MR1-B2M heterodimer adopts a topology similar to classical MHC class I molecules, with alpha-1 and alpha-2 domains of MR1 forming the antigen-binding cleft composed of two alpha-helices resting on a floor of 7-stranded anti-parallel beta-pleated sheet. MR1-B2M heterodimer (via alpha-helices) interacts with TCR (via CDR domains). In terms of processing, N-glycosylated.

It localises to the cell membrane. Its subcellular location is the endoplasmic reticulum membrane. The protein resides in the golgi apparatus membrane. The protein localises to the early endosome membrane. It is found in the late endosome membrane. Functionally, antigen-presenting molecule specialized in displaying microbial pyrimidine-based metabolites to alpha-beta T cell receptors (TCR) on innate-type mucosal-associated invariant T (MAIT) cells. In complex with B2M preferentially presents riboflavin-derived metabolites to semi-invariant TCRs on MAIT cells, guiding immune surveillance of the microbial metabolome at mucosal epithelial barriers. Signature pyrimidine-based microbial antigens are generated via non-enzymatic condensation of metabolite intermediates of the riboflavin pathway with by-products arising from other metabolic pathways such as glycolysis. Typical potent antigenic metabolites are 5-(2-oxoethylideneamino)-6-D-ribitylaminouracil (5-OE-RU) and 5-(2-oxopropylideneamino)-6-D-ribitylaminouracil (5-OP-RU), products of condensation of 5-amino-6-D-ribityaminouracil (5-A-RU) with glyoxal or methylglyoxal by-products, respectively. May present microbial antigens to various MAIT cell subsets, providing for unique recognition of diverse microbes, including pathogens that do not synthesize riboflavin. Upon antigen recognition, elicits rapid innate-type MAIT cell activation to eliminate pathogenic microbes by directly killing infected cells. During T cell development, drives thymic selection and post-thymic terminal differentiation of MAIT cells in a process dependent on commensal microflora. Acts as an immune sensor of cancer cell metabolome. May present a tumor-specific or -associated metabolite essential for cancer cell survival to a pan-cancer TCR on a non-MAIT CD8-positive T cell clone, triggering T cell-mediated killing of a wide range of cancer cell types. May present tumor-enriched pyridoxal and pyridoxal 5'-phosphate antigens, enabling preferential recognition of cancer cells. Presents nucleobase carbonyl adducts generated during oxidative stress. Captures M3Ade, a nucleobase adduct composed of one adenine modified by a malondialdehyde trimer, for recognition by MR1-restricted T cell clones expressing a polyclonal TCR repertoire. In Pongo pygmaeus (Bornean orangutan), this protein is Major histocompatibility complex class I-related gene protein.